The chain runs to 373 residues: Protein CAF40 (373 aa).

The interval 1–91 is disordered; that stretch reads MFSAQKPIYG…ANATRNNPNM (91 aa). Gly residues predominate over residues 11–22; the sequence is NGAGVNMGGGGP. The segment covering 50–88 has biased composition (low complexity); sequence GGPMLMGNTPNNNNSNENGENNGNNGNNGGNDANATRNN.

Belongs to the CNOT9 family. As to quaternary structure, subunit of the 1.0 MDa CCR4-NOT core complex that contains CCR4, CAF1, NOT1, NOT2, NOT3, NOT4, NOT5, CAF40 and CAF130. In the complex interacts with NOT1. The core complex probably is part of a less characterized 1.9 MDa CCR4-NOT complex.

The protein resides in the cytoplasm. It is found in the nucleus. Functionally, acts as a component of the CCR4-NOT core complex, which in the nucleus seems to be a general transcription factor, and in the cytoplasm the major mRNA deadenylase involved in mRNA turnover. The sequence is that of Protein CAF40 (CAF40) from Saccharomyces cerevisiae (strain ATCC 204508 / S288c) (Baker's yeast).